A 145-amino-acid polypeptide reads, in one-letter code: D-aminoacyl-tRNA deacylase (145 aa).

A Gly-cisPro motif, important for rejection of L-amino acids motif is present at residues 137 to 138 (GP).

This sequence belongs to the DTD family. As to quaternary structure, homodimer.

Its subcellular location is the cytoplasm. It carries out the reaction glycyl-tRNA(Ala) + H2O = tRNA(Ala) + glycine + H(+). The catalysed reaction is a D-aminoacyl-tRNA + H2O = a tRNA + a D-alpha-amino acid + H(+). Functionally, an aminoacyl-tRNA editing enzyme that deacylates mischarged D-aminoacyl-tRNAs. Also deacylates mischarged glycyl-tRNA(Ala), protecting cells against glycine mischarging by AlaRS. Acts via tRNA-based rather than protein-based catalysis; rejects L-amino acids rather than detecting D-amino acids in the active site. By recycling D-aminoacyl-tRNA to D-amino acids and free tRNA molecules, this enzyme counteracts the toxicity associated with the formation of D-aminoacyl-tRNA entities in vivo and helps enforce protein L-homochirality. This Limosilactobacillus reuteri (strain DSM 20016) (Lactobacillus reuteri) protein is D-aminoacyl-tRNA deacylase.